The sequence spans 199 residues: MVKMLVLYYSAYGHMEQMAKAAAEGAREGGAEVTLKRVPELVPEEVAKASHYKIDQEAPIATPGELADYDAIIIGTATRYGMMASQMKNFLDQTGGLWAKGALINKVGSVMVSTATQYGGAELALISTQWQMQHHGMIIVPLSYAYREQMGNDVVRGGAPYGMTTTADGDGSRQPSAQELDGARFQGRRVAEITAKLHG.

Residues 4 to 190 (MLVLYYSAYG…DGARFQGRRV (187 aa)) form the Flavodoxin-like domain. FMN contacts are provided by residues 10-15 (SAYGHM) and 78-80 (TRY). Y12 provides a ligand contact to NAD(+). Position 98 (W98) interacts with substrate. Residues 113 to 119 (STATQYG) and H134 contribute to the FMN site. The interval 161 to 181 (YGMTTTADGDGSRQPSAQELD) is disordered. The segment covering 163 to 177 (MTTTADGDGSRQPSA) has biased composition (polar residues).

Belongs to the WrbA family. FMN serves as cofactor.

The catalysed reaction is a quinone + NADH + H(+) = a quinol + NAD(+). It carries out the reaction a quinone + NADPH + H(+) = a quinol + NADP(+). The sequence is that of NAD(P)H dehydrogenase (quinone) from Brucella canis (strain ATCC 23365 / NCTC 10854 / RM-666).